A 213-amino-acid polypeptide reads, in one-letter code: High frequency lysogenization protein HflD homolog (213 aa).

Residues 79–122 (QGLNAELTRYTLSLMVLERKLSSAKGALNTLGDRINGLQRQLDH) are a coiled coil.

It belongs to the HflD family.

It is found in the cytoplasm. The protein localises to the cell inner membrane. This chain is High frequency lysogenization protein HflD homolog, found in Salmonella typhi.